Reading from the N-terminus, the 116-residue chain is Large ribosomal subunit protein uL18 (116 aa).

Belongs to the universal ribosomal protein uL18 family. In terms of assembly, part of the 50S ribosomal subunit; part of the 5S rRNA/L5/L18/L25 subcomplex. Contacts the 5S and 23S rRNAs.

Functionally, this is one of the proteins that bind and probably mediate the attachment of the 5S RNA into the large ribosomal subunit, where it forms part of the central protuberance. In Exiguobacterium sibiricum (strain DSM 17290 / CCUG 55495 / CIP 109462 / JCM 13490 / 255-15), this protein is Large ribosomal subunit protein uL18.